The primary structure comprises 652 residues: DNA ligase (652 aa).

Residues 29 to 33 (DAEYD), 78 to 79 (SL), and Glu-107 each bind NAD(+). Lys-109 acts as the N6-AMP-lysine intermediate in catalysis. 4 residues coordinate NAD(+): Arg-130, Glu-164, Lys-278, and Lys-302. 4 residues coordinate Zn(2+): Cys-395, Cys-398, Cys-413, and Cys-418. The 76-residue stretch at 577–652 (TDDAILSGKT…VKDEAWLLDL (76 aa)) folds into the BRCT domain.

The protein belongs to the NAD-dependent DNA ligase family. LigA subfamily. Requires Mg(2+) as cofactor. The cofactor is Mn(2+).

It carries out the reaction NAD(+) + (deoxyribonucleotide)n-3'-hydroxyl + 5'-phospho-(deoxyribonucleotide)m = (deoxyribonucleotide)n+m + AMP + beta-nicotinamide D-nucleotide.. Its function is as follows. DNA ligase that catalyzes the formation of phosphodiester linkages between 5'-phosphoryl and 3'-hydroxyl groups in double-stranded DNA using NAD as a coenzyme and as the energy source for the reaction. It is essential for DNA replication and repair of damaged DNA. The protein is DNA ligase of Streptococcus thermophilus (strain ATCC BAA-491 / LMD-9).